The sequence spans 281 residues: Apolipoprotein Eb (281 aa).

An N-terminal signal peptide occupies residues 1–18 (MRSLVVFFALAVLTGCQA). Residues 19–24 (RSLFQA) constitute a propeptide that is removed on maturation. Positions 34–66 (MVDRFWQYVSELNTQTDGMVQNIKGSQLSRELD) are 3 X approximate tandem repeats. 9 tandem repeats follow at residues 67 to 88 (TLIT…TQMT), 89 to 110 (PYAS…GKLQ), 111 to 132 (TDMT…TMME), 133 to 154 (QNAD…KRLN), 155 to 176 (KDTE…SRAS), 177 to 199 (QNAD…GATQ), 200 to 227 (KLGA…GALK), 228 to 249 (EKLE…DELT), and 254 to 281 (PYSQ…PTQA). The interval 67–281 (TLITDTMAEL…EATAALPTQA (215 aa)) is 9 X 22 AA approximate tandem repeats.

The protein belongs to the apolipoprotein A1/A4/E family. As to quaternary structure, homotetramer.

The protein localises to the secreted. Its subcellular location is the extracellular space. It is found in the extracellular matrix. Functionally, APOE is an apolipoprotein, a protein associating with lipid particles, that mainly functions in lipoprotein-mediated lipid transport between organs via the plasma and interstitial fluids. APOE is a core component of plasma lipoproteins and is involved in their production, conversion and clearance. Apolipoproteins are amphipathic molecules that interact both with lipids of the lipoprotein particle core and the aqueous environment of the plasma. The protein is Apolipoprotein Eb (apoeb) of Danio rerio (Zebrafish).